Consider the following 259-residue polypeptide: MIPLTPLFSRYKDSYLLYSFRLIDLLRASKSTHLTKLLSSQATYLYHFACLMKYKDIQKYEVQQLIEWAINASPDMDLQQFRIEFMDKTTELNLRSCQPKSFTYTFTTIWDTMHFLSLIIDDMVYTRDKSSLDFVMQQLKTMKVLFYNVFFILQCAMCRDHYMNVKGFIIYHIELIEIALDKEKYGTDITFVDSYQQETAGADVAVVSNNMLMKNLMAYVSMTFHNHINDYKWIQRNKKPPAHYERMTWGEYKKLLNLQ.

It belongs to the baculoviridae p33 family. In terms of assembly, homodimer.

It localises to the host cytoplasm. The protein resides in the host nucleus. The catalysed reaction is 2 R'C(R)SH + O2 = R'C(R)S-S(R)CR' + H2O2. Functionally, functional FAD-linked sulfhydryl oxidase that is required for infectious budded virion (BV) production and for the formation of enveloped occluded virion (ODV). This is FAD-linked sulfhydryl oxidase (P33) from Lepidoptera (butterflies and moths).